The following is a 719-amino-acid chain: B3 domain-containing protein Os03g0120900 (719 aa).

Positions 7–110 (HHHFIKVMVG…HFMVLPFGLN (104 aa)) form a DNA-binding region, TF-B3. Disordered stretches follow at residues 328-381 (RGSF…RSEQ) and 412-443 (EEPQHNQGENEGNLDQVNNKETDEEQIERNAV). A compositionally biased stretch (basic and acidic residues) spans 351-366 (DSAENTLKERSEERQP). Residues 416 to 430 (HNQGENEGNLDQVNN) are compositionally biased toward polar residues.

It is found in the nucleus. In Oryza sativa subsp. japonica (Rice), this protein is B3 domain-containing protein Os03g0120900.